The primary structure comprises 1125 residues: tRNA (34-2'-O)-methyltransferase regulator WDR6 (1125 aa).

M1 is modified (N-acetylmethionine). 17 WD repeats span residues 89–130 (SKGL…GNVA), 155–197 (TDRC…PDNK), 207–246 (GHVG…VPGG), 256–294 (GHSA…QAFR), 295–335 (GHQG…YPGL), 346–384 (SRPG…WEQL), 433–475 (LFQG…TGKA), 489–528 (SKQR…FKKP), 567–605 (HGKQ…QPVL), 611–650 (RGMN…KLHI), 652–692 (NCGG…IRPN), 725–765 (EHPD…GAAH), 767–798 (LTAV…HPGL), 860–905 (TRYM…RILH), 912–958 (HHKR…DRGS), 982–1024 (AHSC…PELE), and 1047–1085 (AHAA…PTFM).

The protein belongs to the WD repeat WDR6 family. In terms of assembly, interacts with FTSJ1; the interaction is direct, and required for 2'-O-methylation of position 34 in substrate tRNAs. Interacts with IRS4. Interacts with STK11/LKB1. As to expression, expressed in hypothalamus, hippocampus, cerebrum cortex and cerebellum.

It localises to the cytoplasm. Together with methyltransferase FTSJ1, methylates the 2'-O-ribose of nucleotides at position 34 of the tRNA anticodon loop of substrate tRNAs. Required for the correct positioning of the substrate tRNA for methylation. Required to suppress amino acid starvation-induced autophagy. Enhances the STK11/LKB1-induced cell growth suppression activity. This Rattus norvegicus (Rat) protein is tRNA (34-2'-O)-methyltransferase regulator WDR6 (Wdr6).